The chain runs to 137 residues: Small ribosomal subunit protein bS6 (137 aa).

Residues 96–137 form a disordered region; that stretch reads ITEASPMAKAKDERDTRRSSEERAPRAEATEEVKESAENTAE. A compositionally biased stretch (basic and acidic residues) spans 104–137; it reads KAKDERDTRRSSEERAPRAEATEEVKESAENTAE.

The protein belongs to the bacterial ribosomal protein bS6 family.

Functionally, binds together with bS18 to 16S ribosomal RNA. This is Small ribosomal subunit protein bS6 from Shewanella piezotolerans (strain WP3 / JCM 13877).